The sequence spans 528 residues: Peptide chain release factor 3 (528 aa).

One can recognise a tr-type G domain in the interval 10–278 (DRRRTFGIIS…AFVQMAPPPH (269 aa)). Residues 19-26 (SHPDAGKT), 87-91 (DTPGH), and 141-144 (NKLD) contribute to the GTP site.

It belongs to the TRAFAC class translation factor GTPase superfamily. Classic translation factor GTPase family. PrfC subfamily.

The protein resides in the cytoplasm. Functionally, increases the formation of ribosomal termination complexes and stimulates activities of RF-1 and RF-2. It binds guanine nucleotides and has strong preference for UGA stop codons. It may interact directly with the ribosome. The stimulation of RF-1 and RF-2 is significantly reduced by GTP and GDP, but not by GMP. This is Peptide chain release factor 3 from Syntrophobacter fumaroxidans (strain DSM 10017 / MPOB).